The primary structure comprises 242 residues: UPF0309 protein BMEA_B0892 (242 aa).

Residues 30 to 214 (AADLIAAAAR…ARLVGEGDAP (185 aa)) enclose the SIS domain.

This sequence belongs to the UPF0309 family.

In Brucella melitensis biotype 2 (strain ATCC 23457), this protein is UPF0309 protein BMEA_B0892.